The chain runs to 68 residues: Small ribosomal subunit protein bS21 (68 aa).

A disordered region spans residues 36–68 (YEKPSEKRARERAAAVRRSRKLERKRAERDGIR). The span at 37–49 (EKPSEKRARERAA) shows a compositional bias: basic and acidic residues. Over residues 50–59 (AVRRSRKLER) the composition is skewed to basic residues.

This sequence belongs to the bacterial ribosomal protein bS21 family.

This chain is Small ribosomal subunit protein bS21, found in Zymomonas mobilis subsp. mobilis (strain ATCC 31821 / ZM4 / CP4).